A 408-amino-acid chain; its full sequence is Broad specificity amino-acid racemase (408 aa).

Positions 1–24 are cleaved as a signal peptide; that stretch reads MNFKKTLLSIAIASASLTPAFSYS. Cys-71 and Cys-97 form a disulfide bridge. Lys-75 (proton acceptor) is an active-site residue. Lys-75 carries the N6-(pyridoxal phosphate)lysine modification. Residue Arg-174 coordinates substrate. The active-site Proton acceptor is the Tyr-300. Met-348 serves as a coordination point for substrate.

This sequence belongs to the alanine racemase family. Bsr subfamily. Pyridoxal 5'-phosphate is required as a cofactor.

It localises to the periplasm. The catalysed reaction is an L-alpha-amino acid = a D-alpha-amino acid. The enzyme catalyses L-lysine = D-lysine. It catalyses the reaction L-arginine = D-arginine. Its function is as follows. Amino-acid racemase able to utilize a broad range of substrates. This is Broad specificity amino-acid racemase (alr) from Vibrio vulnificus (strain CMCP6).